Reading from the N-terminus, the 202-residue chain is Dephospho-CoA kinase (202 aa).

The region spanning 6–202 (KISVTGDPSS…QCFKALKGTI (197 aa)) is the DPCK domain. 14–19 (SSGKTE) lines the ATP pocket.

This sequence belongs to the CoaE family.

It localises to the cytoplasm. The catalysed reaction is 3'-dephospho-CoA + ATP = ADP + CoA + H(+). It participates in cofactor biosynthesis; coenzyme A biosynthesis; CoA from (R)-pantothenate: step 5/5. In terms of biological role, catalyzes the phosphorylation of the 3'-hydroxyl group of dephosphocoenzyme A to form coenzyme A. The protein is Dephospho-CoA kinase of Chlamydia trachomatis serovar A (strain ATCC VR-571B / DSM 19440 / HAR-13).